The chain runs to 59 residues: Large ribosomal subunit protein bL32c (59 aa).

This sequence belongs to the bacterial ribosomal protein bL32 family.

The protein localises to the plastid. It localises to the chloroplast. The chain is Large ribosomal subunit protein bL32c from Physcomitrium patens (Spreading-leaved earth moss).